Reading from the N-terminus, the 129-residue chain is Small ribosomal subunit protein uS11 (129 aa).

It belongs to the universal ribosomal protein uS11 family. As to quaternary structure, part of the 30S ribosomal subunit. Interacts with proteins S7 and S18. Binds to IF-3.

Functionally, located on the platform of the 30S subunit, it bridges several disparate RNA helices of the 16S rRNA. Forms part of the Shine-Dalgarno cleft in the 70S ribosome. The chain is Small ribosomal subunit protein uS11 from Hahella chejuensis (strain KCTC 2396).